Consider the following 173-residue polypeptide: Transcription factor E (173 aa).

Residues 9–92 (NNPATRAYIH…LWQLRIDLLY (84 aa)) enclose the HTH TFE/IIEalpha-type domain.

This sequence belongs to the TFE family. As to quaternary structure, monomer. Interaction with RNA polymerase subunits RpoF and RpoE is necessary for Tfe stimulatory transcription activity. Able to interact with Tbp and RNA polymerase in the absence of DNA promoter. Interacts both with the preinitiation and elongation complexes.

Its function is as follows. Transcription factor that plays a role in the activation of archaeal genes transcribed by RNA polymerase. Facilitates transcription initiation by enhancing TATA-box recognition by TATA-box-binding protein (Tbp), and transcription factor B (Tfb) and RNA polymerase recruitment. Not absolutely required for transcription in vitro, but particularly important in cases where Tbp or Tfb function is not optimal. It dynamically alters the nucleic acid-binding properties of RNA polymerases by stabilizing the initiation complex and destabilizing elongation complexes. Seems to translocate with the RNA polymerase following initiation and acts by binding to the non template strand of the transcription bubble in elongation complexes. The sequence is that of Transcription factor E from Methanoregula boonei (strain DSM 21154 / JCM 14090 / 6A8).